Reading from the N-terminus, the 188-residue chain is MNLKDKILGVAKELFIKNGYNATTTGEIVKLSESSKGNLYYHFKTKENLFLEILNIEESKWQEQWKKEQIKCKTNREKFYLYNELSLTTEYYYPLQNAIIEFYTEYYKTNSINEKMNKLENKYIDAYHVIFKEGNLNGEWCINDVNAVSKIAANAVNGIVTFTHEQNINERIKLMNKFSQIFLNGLSK.

The HTH tetR-type domain occupies 1 to 61 (MNLKDKILGV…EILNIEESKW (61 aa)). Residues 24-43 (TTGEIVKLSESSKGNLYYHF) constitute a DNA-binding region (H-T-H motif).

As to quaternary structure, homodimer. Binds cooperatively to DNA as a pair of dimers.

Transcriptional repressor of qacA. Binds to IR1, an unusually long 28 bp operator, which is located downstream from the qacA promoter and overlaps its transcription start site. QacR is induced from its IR1 site by binding to one of many structurally dissimilar cationic lipophilic compounds, which are also substrates of QacA. This Staphylococcus aureus (strain Mu50 / ATCC 700699) protein is HTH-type transcriptional regulator QacR (qacR).